We begin with the raw amino-acid sequence, 130 residues long: UPF0713 protein YngL (130 aa).

The next 3 helical transmembrane spans lie at 4-25, 62-84, and 89-111; these read LSFL…LIVF, MLNC…YLFL, and IPLI…VGVG.

It belongs to the UPF0713 family.

It localises to the cell membrane. This chain is UPF0713 protein YngL (yngL), found in Bacillus subtilis (strain 168).